The following is a 64-amino-acid chain: Large ribosomal subunit protein bL28 (64 aa).

The tract at residues 1-23 (MSKECYFTGRKTVSSNNRSHAMN) is disordered. A compositionally biased stretch (polar residues) spans 11–23 (KTVSSNNRSHAMN).

The protein belongs to the bacterial ribosomal protein bL28 family.

In Lactococcus lactis subsp. cremoris (strain SK11), this protein is Large ribosomal subunit protein bL28.